Consider the following 178-residue polypeptide: Large ribosomal subunit protein uL6 (178 aa).

Belongs to the universal ribosomal protein uL6 family. Part of the 50S ribosomal subunit.

This protein binds to the 23S rRNA, and is important in its secondary structure. It is located near the subunit interface in the base of the L7/L12 stalk, and near the tRNA binding site of the peptidyltransferase center. This Helicobacter pylori (strain J99 / ATCC 700824) (Campylobacter pylori J99) protein is Large ribosomal subunit protein uL6.